Here is a 334-residue protein sequence, read N- to C-terminus: GTPase Obg (334 aa).

Positions 1 to 159 (MRFVDEVVIK…KEVRLELNLL (159 aa)) constitute an Obg domain. An OBG-type G domain is found at 160–331 (ADVALLGLPN…LAKKLNEFLQ (172 aa)). Residues 166–173 (GLPNAGKS), 191–195 (FTTMY), 212–215 (DIPG), 282–285 (NKID), and 312–314 (SAA) contribute to the GTP site. The Mg(2+) site is built by Ser173 and Thr193.

It belongs to the TRAFAC class OBG-HflX-like GTPase superfamily. OBG GTPase family. In terms of assembly, monomer. The cofactor is Mg(2+).

It localises to the cytoplasm. In terms of biological role, an essential GTPase which binds GTP, GDP and possibly (p)ppGpp with moderate affinity, with high nucleotide exchange rates and a fairly low GTP hydrolysis rate. Plays a role in control of the cell cycle, stress response, ribosome biogenesis and in those bacteria that undergo differentiation, in morphogenesis control. This is GTPase Obg from Francisella tularensis subsp. tularensis (strain WY96-3418).